The sequence spans 93 residues: YcgL domain-containing protein PSHAb0508 (93 aa).

The 85-residue stretch at 1–85 (MLTAVYKSKK…PQENLLSQLR (85 aa)) folds into the YcgL domain.

This chain is YcgL domain-containing protein PSHAb0508, found in Pseudoalteromonas translucida (strain TAC 125).